A 297-amino-acid polypeptide reads, in one-letter code: CASP-like protein 2U8 (297 aa).

Over 1–10 (MLELYEKRRA) the chain is Cytoplasmic. The helical transmembrane segment at 11 to 31 (LLLLRLAAMFLSLAALLITVL) threads the bilayer. Residues 32-64 (NREDGFFSINVFGSPQPILAKATADFTLVKGLK) lie on the Extracellular side of the membrane. A helical transmembrane segment spans residues 65 to 85 (FFAGAMGIVAGYSFLQLAIAM). The Cytoplasmic segment spans residues 86–101 (ASIFSGAPSILGGKRM). The chain crosses the membrane as a helical span at residues 102–122 (AWLCFVGDMTASHLCAAAAAV). Residues 123–148 (SAQLAYLGKRGAPMWSAVCTYFSHYC) are Extracellular-facing. The chain crosses the membrane as a helical span at residues 149–169 (LVFGLAVILAFLATLAALLVA). Residues 170–297 (SISSYHLAYD…RVLEMETPCK (128 aa)) lie on the Cytoplasmic side of the membrane.

The protein belongs to the Casparian strip membrane proteins (CASP) family. As to quaternary structure, homodimer and heterodimers.

It is found in the cell membrane. This chain is CASP-like protein 2U8, found in Selaginella moellendorffii (Spikemoss).